The chain runs to 481 residues: MSGQADIALIGLAVMGQNLILNMDEKGFVVCAYNRTVAKVKEFLANEAKGTNVIGADSLKDMVSKLKSPRKVMLLVKGGSAVDDFIQQLVPLLSAGDVIIDGGNSEYQDTSRRCDELAKLGLLYVGSGVSGGEEGARHGPSLMPGGHEAAWPLIQPIFQAICAKADGEPCCEWVGDGGAGHFVKMVHNGIEYGDMQLICEAYHIMQSLGLSADQMADEFGKWNSAELDSFLIEITRDILKYKDGKGHLLERIRDTAGQKGTGKWTAIAALQYGVPVTLIGEAVFSRCLSALKDERVQASSVLKGPSTKAEVANLTKFLDDIKHALYCAKIVSYAQGFMLMREAARENKWRLNYGGIALMWRGGCIIRSVFLGNIKDAYTSQPQLSNLLLDDFFKKAIERGQDSWREVVANAFRWGIPVPALSTALSFYDGYRTAKLPANLLQAQRDYFGAHTYELLGQEGQFHHTNWTGTGGNVSASTYQA.

Residues 11-16 (GLAVMG), 34-36 (NRT), 76-78 (VKG), and Asn104 each bind NADP(+). Substrate contacts are provided by residues Asn104 and 130–132 (SGG). The active-site Proton acceptor is Lys184. 187 to 188 (HN) serves as a coordination point for substrate. Glu191 (proton donor) is an active-site residue. Tyr192, Lys259, Arg286, Arg445, and His451 together coordinate substrate.

It belongs to the 6-phosphogluconate dehydrogenase family. In terms of assembly, homodimer.

The enzyme catalyses 6-phospho-D-gluconate + NADP(+) = D-ribulose 5-phosphate + CO2 + NADPH. It functions in the pathway carbohydrate degradation; pentose phosphate pathway; D-ribulose 5-phosphate from D-glucose 6-phosphate (oxidative stage): step 3/3. Catalyzes the oxidative decarboxylation of 6-phosphogluconate to ribulose 5-phosphate and CO(2), with concomitant reduction of NADP to NADPH. The chain is 6-phosphogluconate dehydrogenase, decarboxylating (Pgd) from Drosophila simulans (Fruit fly).